Consider the following 407-residue polypeptide: Peptidase T (407 aa).

Residue histidine 77 coordinates Zn(2+). The active site involves aspartate 79. Residue aspartate 138 participates in Zn(2+) binding. The Proton acceptor role is filled by glutamate 172. The Zn(2+) site is built by glutamate 173, aspartate 195, and histidine 377.

The protein belongs to the peptidase M20B family. Zn(2+) serves as cofactor.

It localises to the cytoplasm. It carries out the reaction Release of the N-terminal residue from a tripeptide.. Functionally, cleaves the N-terminal amino acid of tripeptides. The protein is Peptidase T of Aeromonas salmonicida (strain A449).